The primary structure comprises 430 residues: Probable glucose-6-phosphate isomerase (430 aa).

Residue glutamate 271 is the Proton donor of the active site. Catalysis depends on residues histidine 292, histidine 303, and lysine 403.

The protein belongs to the GPI family.

Its subcellular location is the cytoplasm. It carries out the reaction alpha-D-glucose 6-phosphate = beta-D-fructose 6-phosphate. The protein operates within carbohydrate biosynthesis; gluconeogenesis. It participates in carbohydrate degradation; glycolysis; D-glyceraldehyde 3-phosphate and glycerone phosphate from D-glucose: step 2/4. In terms of biological role, catalyzes the reversible isomerization of glucose-6-phosphate to fructose-6-phosphate. The sequence is that of Probable glucose-6-phosphate isomerase from Haloquadratum walsbyi (strain DSM 16790 / HBSQ001).